Reading from the N-terminus, the 30-residue chain is Elongation factor 1-delta (30 aa).

This sequence belongs to the EF-1-beta/EF-1-delta family. EF-1 is composed of 4 subunits: alpha, beta (1B-alpha=beta'), delta (1B-beta), and gamma (1B-gamma).

Functionally, EF-1-beta and EF-1-delta stimulate the exchange of GDP bound to EF-1-alpha to GTP. The polypeptide is Elongation factor 1-delta (Populus euphratica (Euphrates poplar)).